We begin with the raw amino-acid sequence, 284 residues long: 2,3,4,5-tetrahydropyridine-2,6-dicarboxylate N-succinyltransferase (284 aa).

The substrate site is built by arginine 111 and aspartate 148.

It belongs to the transferase hexapeptide repeat family. In terms of assembly, homotrimer.

The protein localises to the cytoplasm. It carries out the reaction (S)-2,3,4,5-tetrahydrodipicolinate + succinyl-CoA + H2O = (S)-2-succinylamino-6-oxoheptanedioate + CoA. It participates in amino-acid biosynthesis; L-lysine biosynthesis via DAP pathway; LL-2,6-diaminopimelate from (S)-tetrahydrodipicolinate (succinylase route): step 1/3. In Agrobacterium fabrum (strain C58 / ATCC 33970) (Agrobacterium tumefaciens (strain C58)), this protein is 2,3,4,5-tetrahydropyridine-2,6-dicarboxylate N-succinyltransferase.